Consider the following 283-residue polypeptide: Pantothenate synthetase (283 aa).

Position 30 to 37 (30 to 37 (MGNLHDGH)) interacts with ATP. His-37 acts as the Proton donor in catalysis. Gln-61 contacts (R)-pantoate. Gln-61 serves as a coordination point for beta-alanine. ATP is bound at residue 149–152 (GEKD). (R)-pantoate is bound at residue Gln-155. 186–189 (LSSR) is an ATP binding site.

It belongs to the pantothenate synthetase family. Homodimer.

It is found in the cytoplasm. The catalysed reaction is (R)-pantoate + beta-alanine + ATP = (R)-pantothenate + AMP + diphosphate + H(+). The protein operates within cofactor biosynthesis; (R)-pantothenate biosynthesis; (R)-pantothenate from (R)-pantoate and beta-alanine: step 1/1. In terms of biological role, catalyzes the condensation of pantoate with beta-alanine in an ATP-dependent reaction via a pantoyl-adenylate intermediate. The polypeptide is Pantothenate synthetase (Escherichia coli O45:K1 (strain S88 / ExPEC)).